Here is a 316-residue protein sequence, read N- to C-terminus: Petrobactin import system permease protein YclN (316 aa).

8 consecutive transmembrane segments (helical) span residues 5 to 25, 49 to 69, 94 to 114, 133 to 153, 181 to 201, 224 to 244, 268 to 288, and 290 to 310; these read YLFI…VEDL, LISI…MQQI, LLLF…VFAL, IFIP…ATFI, LLYL…KFTL, LIIV…LPFL, VLLG…IIFP, and EISI…FMLL.

This sequence belongs to the binding-protein-dependent transport system permease family. FecCD subfamily. As to quaternary structure, the complex is composed of two ATP-binding proteins (YclP), two transmembrane proteins (YclN and YclO) and a solute-binding protein (YclQ).

The protein localises to the cell membrane. Part of the ABC transporter complex YclNOPQ involved in uptake of ferric-petrobactin. Petrobactin is a photoreactive 3,4-catecholate siderophore produced by many members of the B.cereus group, including B.anthracis. Probably responsible for the translocation of the substrate across the membrane. The protein is Petrobactin import system permease protein YclN (yclN) of Bacillus subtilis (strain 168).